The primary structure comprises 328 residues: UPF0421 protein SE_1574 (328 aa).

Transmembrane regions (helical) follow at residues Leu-26–Ile-46, Leu-61–Gln-81, Ala-109–Phe-129, and Leu-132–Pro-152.

It belongs to the UPF0421 family.

Its subcellular location is the cell membrane. This Staphylococcus epidermidis (strain ATCC 12228 / FDA PCI 1200) protein is UPF0421 protein SE_1574.